The following is a 565-amino-acid chain: Mitochondrial distribution and morphology protein 34 (565 aa).

The SMP-LTD domain occupies 1–195 (MAFNFNWSPL…LPAIIHRLSL (195 aa)). Disordered regions lie at residues 207-236 (EDQDQNTNTAGEGPGQDPLASPPQDPVDAL), 296-317 (PSDQGDISGGVTSPLSPALSRT), and 348-504 (STYG…RQLP). The segment covering 358 to 370 (RHSKAHARKRKKR) has biased composition (basic residues). Residues 371-381 (VVDLRRPKQPE) show a composition bias toward basic and acidic residues. Residues 382-401 (SETASVTDESSFTETTSAPS) are compositionally biased toward polar residues. Composition is skewed to basic and acidic residues over residues 446–472 (LRRDIATEMLRETGESSSEPARRHAEV) and 483–496 (IRHEPSRYEGEKQE).

It belongs to the MDM34 family. As to quaternary structure, component of the ER-mitochondria encounter structure (ERMES) or MDM complex, composed of mmm1, mdm10, mdm12 and mdm34.

The protein localises to the mitochondrion outer membrane. In terms of biological role, component of the ERMES/MDM complex, which serves as a molecular tether to connect the endoplasmic reticulum (ER) and mitochondria. Components of this complex are involved in the control of mitochondrial shape and protein biogenesis, and function in nonvesicular lipid trafficking between the ER and mitochondria. Mdm34 is required for the interaction of the ER-resident membrane protein mmm1 and the outer mitochondrial membrane-resident beta-barrel protein mdm10. This chain is Mitochondrial distribution and morphology protein 34, found in Aspergillus terreus (strain NIH 2624 / FGSC A1156).